The sequence spans 493 residues: Dipeptidase 3 (493 aa).

The signal sequence occupies residues Met1–Val35. The span at Thr41–Pro60 shows a compositional bias: low complexity. A disordered region spans residues Thr41–Asp74. 2 disulfides stabilise this stretch: Cys143-Cys222 and Cys294-Cys326. Residue Asn331 is glycosylated (N-linked (GlcNAc...) asparagine). A lipid anchor (GPI-anchor amidated serine) is attached at Ser462. Positions Lys463–Val493 are cleaved as a propeptide — removed in mature form.

This sequence belongs to the metallo-dependent hydrolases superfamily. Peptidase M19 family. Homodimer; disulfide-linked. Interacts with TEX101; co-localized on the cell surface of spermatocytes, spermatids, and testicular spermatozoa, co-localized only in cytoplasmic droplets of caput and corpus epididymal sperm. As to expression, expressed in testis but not ovary.

It is found in the membrane. Functionally, lacks dipeptidase activity and is unable to hydrolyze cystinyl-bis-glycine. The absence of activity may be due to the inability of serine (instead of aspartate found in DPEP1/2) at position 356 to function as the acid/base catalyst and activate the nucleophilic water/hydroxide. Does not hydrolyze leukotriene D4 (LTD4) into leukotriene E4 (LTE4). Does not hydrolyze the beta-lactam antibiotic imipenem. The polypeptide is Dipeptidase 3 (Dpep3) (Mus musculus (Mouse)).